We begin with the raw amino-acid sequence, 507 residues long: TOM1-like protein 2 (507 aa).

The 133-residue stretch at 20–152 (ATDGSLQSED…ELKRRGIEFP (133 aa)) folds into the VHS domain. Ser160 bears the Phosphoserine mark. At Thr164 the chain carries Phosphothreonine. The tract at residues 164 to 200 (TPQRSVPEMDPAATIPRSQTQPRTTAGTYSSPPPASY) is disordered. Positions 219–307 (EQIARLRSEL…VFLRYERFER (89 aa)) constitute a GAT domain. Positions 329-334 (NLIDLG) match the Clathrin-binding motif. Residues 466–507 (ERAKAAETVPDLPSPPTEAPAPASNTSTRKKPERSDDALFAL) are disordered. Basic and acidic residues predominate over residues 498–507 (ERSDDALFAL).

This sequence belongs to the TOM1 family. As to quaternary structure, interacts with clathrin, SRC and TOLLIP. Interacts with MYO6. In terms of tissue distribution, ubiquitously expressed. Splicing pattern displays tissue specific variation.

Acts as a MYO6/Myosin VI adapter protein that targets myosin VI to endocytic structures. May also play a role in recruiting clathrin to endosomes. May regulate growth factor-induced mitogenic signaling. The polypeptide is TOM1-like protein 2 (Tom1l2) (Mus musculus (Mouse)).